The following is a 381-amino-acid chain: Chorismate synthase (381 aa).

NADP(+) contacts are provided by Arg-41 and Arg-47. Residues 127 to 129 (RAS), 247 to 248 (QA), Gly-291, 306 to 310 (KPIPT), and Arg-332 each bind FMN.

This sequence belongs to the chorismate synthase family. In terms of assembly, homotetramer. FMNH2 is required as a cofactor.

The catalysed reaction is 5-O-(1-carboxyvinyl)-3-phosphoshikimate = chorismate + phosphate. It participates in metabolic intermediate biosynthesis; chorismate biosynthesis; chorismate from D-erythrose 4-phosphate and phosphoenolpyruvate: step 7/7. Its function is as follows. Catalyzes the anti-1,4-elimination of the C-3 phosphate and the C-6 proR hydrogen from 5-enolpyruvylshikimate-3-phosphate (EPSP) to yield chorismate, which is the branch point compound that serves as the starting substrate for the three terminal pathways of aromatic amino acid biosynthesis. This reaction introduces a second double bond into the aromatic ring system. This Anaeromyxobacter dehalogenans (strain 2CP-1 / ATCC BAA-258) protein is Chorismate synthase.